Here is a 262-residue protein sequence, read N- to C-terminus: DNA-directed RNA polymerase subunit Rpo3 (262 aa).

The protein belongs to the archaeal Rpo3/eukaryotic RPB3 RNA polymerase subunit family. Part of the RNA polymerase complex.

The protein localises to the cytoplasm. It catalyses the reaction RNA(n) + a ribonucleoside 5'-triphosphate = RNA(n+1) + diphosphate. In terms of biological role, DNA-dependent RNA polymerase (RNAP) catalyzes the transcription of DNA into RNA using the four ribonucleoside triphosphates as substrates. The polypeptide is DNA-directed RNA polymerase subunit Rpo3 (Pyrobaculum islandicum (strain DSM 4184 / JCM 9189 / GEO3)).